A 232-amino-acid chain; its full sequence is MSGEGENPASKPTPVQDVQGDGRWMSLHHRFVADSKDKEPEVVFIGDSLVQLMHQCEIWRELFSPLHALNFGIGGDSTQHVLWRLENGELEHIRPKIVVVWVGTNNHSHTAEQVTGGIKAIVQLVNKLQPQARVVVLGLLPRGQHPNPLREKNRQVNELVRAALAGYPRAHFLDADPGFVHSDGTISHHDMYDYLHLSRLGYTPVCRALHSLLLRLLAQDQGQGIPLPETAP.

The disordered stretch occupies residues methionine 1 to glycine 20. Serine 2 is subject to N-acetylserine. Serine 2 is subject to Phosphoserine. Active-site residues include serine 48, aspartate 193, and histidine 196.

This sequence belongs to the 'GDSL' lipolytic enzyme family. Platelet-activating factor acetylhydrolase IB beta/gamma subunits subfamily. As to quaternary structure, forms a catalytic dimer which is either homodimer (alpha1/alpha1 homodimer) or heterodimer with PAFAH1B2 (alpha1/alpha2 heterodimer). Component of the cytosolic (PAF-AH (I)) heterotetrameric enzyme, which is composed of PAFAH1B1 (beta), PAFAH1B2 (alpha2) and PAFAH1B3 (alpha1) subunits. The catalytic activity of the enzyme resides in the alpha1 (PAFAH1B3) and alpha2 (PAFAH1B2) subunits, whereas the beta subunit (PAFAH1B1) has regulatory activity. Trimer formation is not essential for the catalytic activity. Interacts with VLDLR; this interaction may modulate the Reelin pathway. As to expression, expressed in brain, spleen, lung, liver, kidney and testis. Not expressed in heart and skeletal muscle. Expressed in fetal brain as heterodimer. Not expressed in adult tissues. Expressed exclusively in granule cells.

The protein resides in the cytoplasm. It carries out the reaction a 1-O-alkyl-2-acetyl-sn-glycero-3-phosphocholine + H2O = a 1-O-alkyl-sn-glycero-3-phosphocholine + acetate + H(+). It catalyses the reaction 1-O-hexadecyl-2-acetyl-sn-glycero-3-phosphocholine + H2O = 1-O-hexadecyl-sn-glycero-3-phosphocholine + acetate + H(+). The enzyme catalyses 1-O-hexadecyl-2-acetyl-sn-glycero-3-phosphate + H2O = 1-O-hexadecyl-sn-glycero-3-phosphate + acetate + H(+). With respect to regulation, beta subunit (PAFAH1B1) inhibits the acetylhydrolase activity of the alpha1/alpha1 catalytic homodimer. Its function is as follows. Alpha1 catalytic subunit of the cytosolic type I platelet-activating factor (PAF) acetylhydrolase (PAF-AH (I)) heterotetrameric enzyme that catalyzes the hydrolyze of the acetyl group at the sn-2 position of PAF and its analogs and modulates the action of PAF. The activity and substrate specificity of PAF-AH (I) are affected by its subunit composition. Both alpha1/alpha1 homodimer (PAFAH1B3/PAFAH1B3 homodimer) and alpha1/alpha2 heterodimer(PAFAH1B3/PAFAH1B2 heterodimer) hydrolyze 1-O-alkyl-2-acetyl-sn-glycero-3-phosphoric acid (AAGPA) more efficiently than PAF, but they have little hydrolytic activity towards 1-O-alkyl-2-acetyl-sn-glycero-3-phosphorylethanolamine (AAGPE). Plays an important role during the development of brain. The sequence is that of Platelet-activating factor acetylhydrolase IB subunit alpha1 from Rattus norvegicus (Rat).